A 345-amino-acid chain; its full sequence is Protein Tob1 (345 aa).

Residues 22–39 (RRRVNIFGEELERLLKKK) carry the Bipartite nuclear localization signal motif. Residues 82–92 (VRGNLPQDLSV) form an important for nuclear localization region. Residues 144-160 (DPASSVSSSPSPPFGHS) show a composition bias toward low complexity. A disordered region spans residues 144-171 (DPASSVSSSPSPPFGHSAAVSPTFMPRS). The tract at residues 161–218 (AAVSPTFMPRSTQPLTFTTATFAATKFGSTKMKNSGRSNKVARTSPINLGLNVNDLLK) is required for interaction with CPEB3. Position 204 is a phosphothreonine (Thr-204). The Nuclear export signal signature appears at 226–234 (MHSLYGLGL). Positions 231-267 (GLGLGSQQQPQQQQQPAQPPPPPPPPQQQQQQKTSAL) are disordered. Positions 237–246 (QQQPQQQQQP) are enriched in low complexity. Pro residues predominate over residues 247–257 (AQPPPPPPPPQ).

It belongs to the BTG family. In terms of assembly, interacts with ERBB2. Interacts with CNOT7. Interacts with CPEB3 (via C-terminal RNA-binding region); recruits CNOT7 to CPEB3 to form a ternary complex required for mRNA deadenylation and decay. Interacts with CNOT8. Interacts with CPEB4. Post-translationally, phosphorylated on Ser and Thr residues. Ubiquitous.

The protein resides in the cytoplasm. Its subcellular location is the nucleus. In terms of biological role, anti-proliferative protein; the function is mediated by association with deadenylase subunits of the CCR4-NOT complex. Mediates CPEB3-accelerated mRNA deadenylation by binding to CPEB3 and recruiting CNOT7 which leads to target mRNA deadenylation and decay. The protein is Protein Tob1 (TOB1) of Homo sapiens (Human).